The sequence spans 137 residues: Histone H2B (137 aa).

Residues 1 to 10 (MPPKAADKKP) show a composition bias toward basic and acidic residues. Residues 1 to 45 (MPPKAADKKPANKAPATASKAPEKKDAGKKTAASGEKKKRTKARK) form a disordered region. 2 positions are modified to N6-acetyllysine; alternate: Lys-8 and Lys-9. Residues Lys-8 and Lys-9 each participate in a glycyl lysine isopeptide (Lys-Gly) (interchain with G-Cter in SUMO); alternate cross-link. Lys-13 is subject to N6-acetyllysine. Position 24 is an N6-acetyllysine; alternate (Lys-24). Lys-24 is covalently cross-linked (Glycyl lysine isopeptide (Lys-Gly) (interchain with G-Cter in SUMO); alternate). Lys-25 is covalently cross-linked (Glycyl lysine isopeptide (Lys-Gly) (interchain with G-Cter in SUMO)). Lys-131 is covalently cross-linked (Glycyl lysine isopeptide (Lys-Gly) (interchain with G-Cter in ubiquitin)).

The protein belongs to the histone H2B family. As to quaternary structure, the nucleosome is a histone octamer containing two molecules each of H2A, H2B, H3 and H4 assembled in one H3-H4 heterotetramer and two H2A-H2B heterodimers. The octamer wraps approximately 147 bp of DNA. In terms of processing, monoubiquitinated to form H2BK123ub1. H2BK123ub1 gives a specific tag for epigenetic transcriptional activation and is also prerequisite for H3K4me and H3K79me formation. H2BK123ub1 also modulates the formation of double-strand breaks during meiosis and is a prerequisite for DNA-damage checkpoint activation. Post-translationally, acetylated by GCN5 to form H2BK11ac and H2BK16ac. H2BK16ac can also be formed by ESA1. Acetylation of N-terminal lysines and particularly formation of H2BK11acK16ac has a positive effect on transcription. Sumoylation to form H2BK6su or H2BK7su, and probably also H2BK16su or H2BK17su, occurs preferentially near the telomeres and represses gene transcription.

It is found in the nucleus. The protein localises to the chromosome. Functionally, core component of nucleosome. Nucleosomes wrap and compact DNA into chromatin, limiting DNA accessibility to the cellular machineries which require DNA as a template. Histones thereby play a central role in transcription regulation, DNA repair, DNA replication and chromosomal stability. DNA accessibility is regulated via a complex set of post-translational modifications of histones, also called histone code, and nucleosome remodeling. The protein is Histone H2B (HTB1) of Podospora anserina (Pleurage anserina).